The chain runs to 666 residues: Probable potassium transport system protein Kup (666 aa).

12 helical membrane passes run 16–36, 58–78, 100–120, 141–161, 165–185, 221–241, 253–273, 294–314, 343–363, 373–393, 399–419, and 424–444; these read GFII…LYTM, ISLI…LIAL, PWLI…GALT, IYQN…VLFG, FGTG…FSFL, IFIL…YSDL, WPFV…WILA, VYLV…LISG, LYIP…VLAF, YGLA…YYLI, PILA…FFLA, and FMHG…VMFI.

Belongs to the HAK/KUP transporter (TC 2.A.72) family.

It localises to the cell membrane. It catalyses the reaction K(+)(in) + H(+)(in) = K(+)(out) + H(+)(out). Functionally, transport of potassium into the cell. Likely operates as a K(+):H(+) symporter. The chain is Probable potassium transport system protein Kup from Streptococcus pyogenes serotype M49 (strain NZ131).